Consider the following 183-residue polypeptide: UPF0316 protein EF_1609 (183 aa).

Helical transmembrane passes span 1 to 21 (MVVD…YITL), 35 to 55 (VIAP…LSMV), and 62 to 82 (PLNL…GIKI).

It belongs to the UPF0316 family.

It is found in the cell membrane. The sequence is that of UPF0316 protein EF_1609 from Enterococcus faecalis (strain ATCC 700802 / V583).